Reading from the N-terminus, the 490-residue chain is Tegument protein VP16 (490 aa).

A disordered region spans residues 12 to 37 (MDADGASPPPPRPAGGPKNTPAAPPL). Phosphoserine occurs at positions 18, 353, 411, and 452. Residues 411-490 (STAPPTDVSL…DALGIDEYGG (80 aa)) form a transcriptional activation region.

The protein belongs to the herpesviridae tegument protein VP16 protein family. As to quaternary structure, interacts with VP22. Interacts with gH (via C-terminus). Interacts with the virion host shutoff protein (vhs). Interacts with VP11/12. Associates with the VP16-induced complex; binding to host HCFC1 activates VP16 for association with the octamer motif-binding host protein POU2F1, to form a multiprotein-DNA complex responsible for activating transcription of the viral immediate early genes.

The protein localises to the virion tegument. Its subcellular location is the host nucleus. In terms of biological role, transcriptional activator of immediate-early (IE) gene products (alpha genes). Acts as a key activator of lytic infection by initiating the lytic program through the assembly of the transcriptional regulatory VP16-induced complex composed of VP16 and two cellular factors, HCFC1 and POU2F 1. VP16-induced complex represents a regulatory switch: when it is on, it promotes IE-gene expression and thus lytic infection, and when it is off, it limits IE-gene transcription favoring latent infection. Functionally, may play a role in the aggregation of tegument proteins around nucleocapsids during virus morphogenesis. This chain is Tegument protein VP16, found in Homo sapiens (Human).